A 594-amino-acid polypeptide reads, in one-letter code: Chitooligosaccharidolytic beta-N-acetylglucosaminidase (594 aa).

A signal peptide spans 1–22; the sequence is MWSRRIPLFIFGVLVLILSVAA. Cystine bridges form between C31/C59 and C36/C55. N164 carries an N-linked (GlcNAc...) asparagine glycan. Catalysis depends on charge relay system residues D249 and H303. Cystine bridges form between C316/C373 and C326/C331. The active-site Charge relay system is the E368. An N-linked (GlcNAc...) asparagine glycan is attached at N375. 2 cysteine pairs are disulfide-bonded: C478/C491 and C585/C592.

Belongs to the glycosyl hydrolase 20 family. As to quaternary structure, homodimer.

The enzyme catalyses Hydrolysis of terminal non-reducing N-acetyl-D-hexosamine residues in N-acetyl-beta-D-hexosaminides.. Its activity is regulated as follows. Inhibited by O-(2-acetamido-2-deoxy-D-glucopyransylidene)-amino-N-phenylcarbamate (PUGNAc). Inhibited by thiabendazole (TMG)-chitotriomycin. Inhibited by 6-(dimethylamino)-2-(2-(((5-methyl-1,3,4-thiadiazol-2-yl)methyl)amino)ethyl)- 1H-benzo[de]isoquinoline-1,3(2H)-dione (Q2), a synthesized non-carbohydrate unsymmetrical dyad of naphthalimide and thiadiazole having a dimethylamino group at C4 of the naphthalimide. Inhibited poorly by N-acetyl-glucosamine (NAG)-thiazoline (NGT), but when the thiazoline ring of NGT is replaced by a bulky substituent such as in compound 1,2-dideoxy-2'-methylamino-alpha-D-glucopyranoso-[2,1-d]-Delta2'-thiazoline (NMAGT), the inhibition constant Ki is lowered 600-fold compared to that of NGT. Inhibited by berberine, berberine analogs thalifendine and palmatine, and berberine derivative SYSU-1, but not by berberine analog tetrahydroberberine. Its function is as follows. Hydrolyzes one beta-GlcNAc unit at a time from the non-reducing ends of substrates, with a preference for shorter substrates. The 2-acetamido group and the beta-glycoside bond linkage in the substrate are required for its activity. Active with p-nitrophenyl (pNP)-beta-GlcNAc, pNP-beta-GalNAc and chitooligosaccharides (degree of polymerization from 2 to 6), but not with the complex N-glycan substrate (GlcNAcbeta-1,2Manalpha-1,6)(GlcNAcbeta-1,2Manalpha-1,3)Manbeta-1,4GlcNAcbeta-1,4GlcNAc-PA (GnGn-PA), pNP-alpha-GlcNAc or with the long polymer colloidal chitin. Involved in chitin catabolism. Involved in the degradation of old cuticle during the pupation stage. The sequence is that of Chitooligosaccharidolytic beta-N-acetylglucosaminidase from Ostrinia furnacalis (Asian corn borer).